Reading from the N-terminus, the 555-residue chain is Synaptotagmin-14 (555 aa).

Topologically, residues 1–24 (MAIEGGERTCGVHELICIRKVSPE) are extracellular. A helical; Signal-anchor for type III membrane protein membrane pass occupies residues 25–47 (AVGFLSAVGVFIVLMLLLFLYIN). Over 48 to 555 (KKFCFENVGG…VCRWHALLES (508 aa)) the chain is Cytoplasmic. 3 disordered regions span residues 76–97 (YNSY…EALG), 157–179 (TPPL…HLSC), and 205–258 (CPSE…PEPE). Residues 211–224 (TGHEAESYHNKGYE) are compositionally biased toward basic and acidic residues. 2 consecutive C2 domains span residues 260 to 379 (KYGT…SLPV) and 415 to 550 (SVPE…CRWH).

It belongs to the synaptotagmin family. As to quaternary structure, homodimer. Can also form heterodimers. As to expression, expressed in heart and testis. Expressed in brain (especially in the cerebellum).

The protein resides in the membrane. In terms of biological role, may be involved in the trafficking and exocytosis of secretory vesicles in non-neuronal tissues. Is Ca(2+)-independent. This chain is Synaptotagmin-14 (Syt14), found in Mus musculus (Mouse).